Here is a 954-residue protein sequence, read N- to C-terminus: Protein teashirt (954 aa).

Disordered regions lie at residues 20-91, 167-207, and 276-331; these read LPTA…SLPS, ESAE…PQLG, and VKGG…GSGA. Residues 47 to 57 are compositionally biased toward gly residues; that stretch reads HGGGAGSGGVG. Positions 292-303 are enriched in polar residues; sequence SKATTPQAASQP. Residues 318 to 328 are compositionally biased toward gly residues; the sequence is SGGGSGGGAAG. The segment at 354–378 adopts a C2H2-type 1 zinc-finger fold; the sequence is FRCVWCKQSFPTLEALTTHMKDSKH. The interval 383–444 is disordered; it reads VPPFGNLPSN…YRGDPPTPLP (62 aa). Low complexity predominate over residues 417–428; that stretch reads SGSASNHSPSAN. C2H2-type zinc fingers lie at residues 466–490 and 533–557; these read LKCM…ETQH and LTCK…KNNH. Disordered regions lie at residues 563–622, 689–714, and 748–935; these read LQSA…DKND, FDTP…TSPV, and TSSE…NLTA. The span at 568–578 shows a compositional bias: basic residues; that stretch reads ARKRPAPKKRE. Over residues 579-588 the composition is skewed to basic and acidic residues; that stretch reads KSLPVRKLLE. Residues 696 to 712 show a composition bias toward low complexity; sequence ASLPASSPSNSSTKNTS. Phosphoserine is present on residues Ser750 and Ser758. Over residues 778–807 the composition is skewed to basic and acidic residues; it reads GHDEESSKPAIKQEREAESKPVKMEIKSEF. Residues 842-851 show a composition bias toward low complexity; sequence PKTPSSAASP. Composition is skewed to polar residues over residues 862–885 and 893–907; these read AESQ…GSSE and DSLN…SLGS. Positions 910 to 926 are enriched in low complexity; it reads AGANSRAKLAAAAAAGG.

Belongs to the teashirt C2H2-type zinc-finger protein family. As to quaternary structure, binds arm. Shows a dynamic expression pattern during embryogenesis. Expressed in the embryonic trunk region (PS 3-13) with expression strongest in the thoracic segments. Expressed in a small group of cells corresponding to the anal tuft from stage 14. Strongly expressed in the embryonic ventral nerve cord. Also expressed in the proximal domain of the leg imaginal disk and in the region of the wing disk that will give rise to the proximal wing hinge. Expressed at high levels in the anterior and central embryonic midgut mesoderm and in the embryonic midgut endoderm. Expressed at a low level in more posterior visceral mesoderm of the gut. From stage 12 onwards, tsh and tio are colocalized in some cells of the CNS, trunk epidermis, hindgut and Malpighian tubules.

The protein localises to the nucleus. It is found in the cytoplasm. Functionally, homeotic protein that acts downstream of Arm in the Wg cascade during embryogenesis to determine segment identity throughout the entire trunk. Acts cooperatively with other trunk homeotic proteins to repress head homeotic genes and therefore repress head segmental identity. Necessary, in combination with Scr, for the formation of the prothoracic segment. Promotes eye development in the dorsal region of the eye disk and suppresses eye development in the ventral region in combination with Wg-signaling and several early dorso-ventral eye patterning genes. Required for proper development of proximal leg segments. Has differential functions along the dorso-ventral axs of the antennal and leg disks. May play a role in wing hinge development. Possible involvement in chromatin structure for modulation of transcription. Binds DNA and can act as both a transcriptional repressor and activator. Positively regulates its own expression as well as that of Dll. Negatively regulates the expression of mod. Required for Wg-mediated transcriptional repression of Ubx in the midgut. Also represses transcription of lab in the midgut and is necessary for the proper formation of anterior and central midgut structures. Tiptop (tio) and teashirt (tsh) have, on the whole, common activities. Tio and tsh repress each other's expression and tsh has a crucial role for trunk patterning that is in part masked by ectopic expression of tiptop. Both genes share a common activity required for the activation of Ser and svb and the maintenance of en and wg. The chain is Protein teashirt (tsh) from Drosophila melanogaster (Fruit fly).